The sequence spans 200 residues: Pyridoxamine 5'-phosphate oxidase homolog (200 aa).

Phenylalanine 60, lysine 68, and asparagine 125 together coordinate FMN.

It belongs to the pyridoxamine 5'-phosphate oxidase family. It depends on FMN as a cofactor.

The protein resides in the cytoplasm. It is found in the nucleus. The polypeptide is Pyridoxamine 5'-phosphate oxidase homolog (Saccharomyces cerevisiae (strain ATCC 204508 / S288c) (Baker's yeast)).